The following is a 286-amino-acid chain: Bifunctional protein FolD (286 aa).

NADP(+)-binding positions include 168–170 (GRG), T195, and V236.

The protein belongs to the tetrahydrofolate dehydrogenase/cyclohydrolase family. Homodimer.

The enzyme catalyses (6R)-5,10-methylene-5,6,7,8-tetrahydrofolate + NADP(+) = (6R)-5,10-methenyltetrahydrofolate + NADPH. It carries out the reaction (6R)-5,10-methenyltetrahydrofolate + H2O = (6R)-10-formyltetrahydrofolate + H(+). It participates in one-carbon metabolism; tetrahydrofolate interconversion. Functionally, catalyzes the oxidation of 5,10-methylenetetrahydrofolate to 5,10-methenyltetrahydrofolate and then the hydrolysis of 5,10-methenyltetrahydrofolate to 10-formyltetrahydrofolate. The polypeptide is Bifunctional protein FolD (Mycolicibacterium gilvum (strain PYR-GCK) (Mycobacterium gilvum (strain PYR-GCK))).